The sequence spans 101 residues: MSGDGHDGDEVLDELFEVIESRKEELPDGSYTASLFTHEKGENAVLEKLGEETTELLLAAKDDDDEELAHEAADIVYHLLVLLSMKDMELADLRAELRKRR.

This sequence belongs to the PRA-PH family.

It localises to the cytoplasm. It catalyses the reaction 1-(5-phospho-beta-D-ribosyl)-ATP + H2O = 1-(5-phospho-beta-D-ribosyl)-5'-AMP + diphosphate + H(+). Its pathway is amino-acid biosynthesis; L-histidine biosynthesis; L-histidine from 5-phospho-alpha-D-ribose 1-diphosphate: step 2/9. The sequence is that of Phosphoribosyl-ATP pyrophosphatase from Natronomonas pharaonis (strain ATCC 35678 / DSM 2160 / CIP 103997 / JCM 8858 / NBRC 14720 / NCIMB 2260 / Gabara) (Halobacterium pharaonis).